The chain runs to 289 residues: Enoyl-CoA hydratase domain-containing protein 3, mitochondrial (289 aa).

The N-terminal 14 residues, 1–14 (MLLRGFSELLKCRG), are a transit peptide targeting the mitochondrion.

This sequence belongs to the enoyl-CoA hydratase/isomerase family.

The protein localises to the mitochondrion. May play a role in fatty acid biosynthesis and insulin sensitivity. This Danio rerio (Zebrafish) protein is Enoyl-CoA hydratase domain-containing protein 3, mitochondrial (echdc3).